The sequence spans 253 residues: 5'-nucleotidase SurE (253 aa).

The a divalent metal cation site is built by D8, D9, S40, and N92.

Belongs to the SurE nucleotidase family. Requires a divalent metal cation as cofactor.

The protein localises to the cytoplasm. The catalysed reaction is a ribonucleoside 5'-phosphate + H2O = a ribonucleoside + phosphate. In terms of biological role, nucleotidase that shows phosphatase activity on nucleoside 5'-monophosphates. The chain is 5'-nucleotidase SurE from Hyphomonas neptunium (strain ATCC 15444).